Reading from the N-terminus, the 746-residue chain is Alpha-galactosidase 2 (746 aa).

The signal sequence occupies residues 1-26 (MLGAPSPRRLADVLAVTAGLVASVRA). Asparagine 43, asparagine 156, asparagine 180, asparagine 188, asparagine 360, asparagine 427, asparagine 446, and asparagine 495 each carry an N-linked (GlcNAc...) asparagine glycan. The active-site Nucleophile is the aspartate 504. The Proton donor role is filled by aspartate 566. N-linked (GlcNAc...) asparagine glycosylation occurs at asparagine 714.

It belongs to the glycosyl hydrolase 27 family.

It is found in the secreted. The catalysed reaction is Hydrolysis of terminal, non-reducing alpha-D-galactose residues in alpha-D-galactosides, including galactose oligosaccharides, galactomannans and galactolipids.. Its function is as follows. Alpha-galactosidase involved in the degradation of simple oligosaccharides like melibiose, raffinose and stachyose, and of polymeric galacto(gluco)mannans. This chain is Alpha-galactosidase 2 (agl2), found in Hypocrea jecorina (Trichoderma reesei).